We begin with the raw amino-acid sequence, 510 residues long: ETS translocation variant 5 (510 aa).

The interval Phe131–Pro208 is disordered. The segment covering Gly161–Pro174 has biased composition (low complexity). Residues Ala175 to Gly185 show a composition bias toward pro residues. Ser248 is modified (phosphoserine). Lys350 participates in a covalent cross-link: Glycyl lysine isopeptide (Lys-Gly) (interchain with G-Cter in SUMO2). A DNA-binding region (ETS) is located at residues Leu368–Val448.

In terms of assembly, interacts (via C-terminal) with ZMYM5 (via N-terminal 120 amino acid region). As to expression, ubiquitous.

The protein resides in the nucleus. Binds to DNA sequences containing the consensus nucleotide core sequence 5'-GGAA.-3'. This Homo sapiens (Human) protein is ETS translocation variant 5 (ETV5).